The sequence spans 349 residues: Protein BPS1, chloroplastic (349 aa).

The transit peptide at 1-43 (MARPQDPPRGFFPFGNPFKNLSSKNSVLSSKLLPLLNNFETNL) directs the protein to the chloroplast.

Expressed in roots, hypocotyls, cotyledons, leaves, flowers and siliques.

It localises to the plastid. The protein resides in the chloroplast. Functionally, required for normal root and shoot development. Prevents constitutive production of a root mobile carotenoid-derived signaling compound that is capable of arresting shoot and leaf development. This chain is Protein BPS1, chloroplastic, found in Arabidopsis thaliana (Mouse-ear cress).